A 194-amino-acid chain; its full sequence is Large ribosomal subunit protein bL25 (194 aa).

The protein belongs to the bacterial ribosomal protein bL25 family. CTC subfamily. In terms of assembly, part of the 50S ribosomal subunit; part of the 5S rRNA/L5/L18/L25 subcomplex. Contacts the 5S rRNA. Binds to the 5S rRNA independently of L5 and L18.

This is one of the proteins that binds to the 5S RNA in the ribosome where it forms part of the central protuberance. The protein is Large ribosomal subunit protein bL25 of Parabacteroides distasonis (strain ATCC 8503 / DSM 20701 / CIP 104284 / JCM 5825 / NCTC 11152).